Here is a 294-residue protein sequence, read N- to C-terminus: Cytidine deaminase (294 aa).

2 CMP/dCMP-type deaminase domains span residues 48–168 (DDDA…FGPT) and 187–294 (AETD…RVTF). A substrate-binding site is contributed by 89 to 91 (NME). His-102 is a Zn(2+) binding site. Glu-104 (proton donor) is an active-site residue. Residues Cys-129 and Cys-132 each contribute to the Zn(2+) site.

The protein belongs to the cytidine and deoxycytidylate deaminase family. In terms of assembly, homodimer. Zn(2+) serves as cofactor.

It catalyses the reaction cytidine + H2O + H(+) = uridine + NH4(+). The enzyme catalyses 2'-deoxycytidine + H2O + H(+) = 2'-deoxyuridine + NH4(+). In terms of biological role, this enzyme scavenges exogenous and endogenous cytidine and 2'-deoxycytidine for UMP synthesis. The sequence is that of Cytidine deaminase from Yersinia pseudotuberculosis serotype O:1b (strain IP 31758).